Reading from the N-terminus, the 448-residue chain is NADP-specific glutamate dehydrogenase (448 aa).

Residues Lys88, Gln109, and Lys112 each contribute to the substrate site. Lys124 functions as the Proton donor in the catalytic mechanism. A substrate-binding site is contributed by Gly163. The NADP(+) site is built by Thr207 and Asn238. Ser375 contributes to the substrate binding site.

This sequence belongs to the Glu/Leu/Phe/Val dehydrogenases family. In terms of assembly, homohexamer.

The catalysed reaction is L-glutamate + NADP(+) + H2O = 2-oxoglutarate + NH4(+) + NADPH + H(+). Catalyzes the reversible oxidative deamination of glutamate to alpha-ketoglutarate and ammonia. This is NADP-specific glutamate dehydrogenase (gdhA) from Psychrobacter sp. (strain TAD1).